The primary structure comprises 355 residues: tRNA-specific 2-thiouridylase MnmA (355 aa).

Residues 7 to 14 and L33 each bind ATP; that span reads GLSGGVDS. Residue C94 is the Nucleophile of the active site. Residues C94 and C193 are joined by a disulfide bond. Residue G119 participates in ATP binding. Residues 143–145 form an interaction with tRNA region; sequence KDQ. Residue C193 is the Cysteine persulfide intermediate of the active site. Positions 298-299 are interaction with tRNA; it reads RY.

It belongs to the MnmA/TRMU family.

It is found in the cytoplasm. The enzyme catalyses S-sulfanyl-L-cysteinyl-[protein] + uridine(34) in tRNA + AH2 + ATP = 2-thiouridine(34) in tRNA + L-cysteinyl-[protein] + A + AMP + diphosphate + H(+). In terms of biological role, catalyzes the 2-thiolation of uridine at the wobble position (U34) of tRNA, leading to the formation of s(2)U34. The chain is tRNA-specific 2-thiouridylase MnmA from Acaryochloris marina (strain MBIC 11017).